The sequence spans 245 residues: tRNA (guanine-N(1)-)-methyltransferase (245 aa).

Residues Gly-112 and 132 to 137 (IGDFVL) each bind S-adenosyl-L-methionine.

Belongs to the RNA methyltransferase TrmD family. In terms of assembly, homodimer.

It is found in the cytoplasm. It catalyses the reaction guanosine(37) in tRNA + S-adenosyl-L-methionine = N(1)-methylguanosine(37) in tRNA + S-adenosyl-L-homocysteine + H(+). In terms of biological role, specifically methylates guanosine-37 in various tRNAs. This is tRNA (guanine-N(1)-)-methyltransferase from Geobacter sulfurreducens (strain ATCC 51573 / DSM 12127 / PCA).